A 389-amino-acid chain; its full sequence is Geodin cluster transcriptional coactivator gedD (389 aa).

The 71-residue stretch at L13–L83 folds into the HTH iclR-type domain. Residues V43–R62 constitute a DNA-binding region (H-T-H motif).

The protein resides in the nucleus. Functionally, transcriptional coactivator; part of the gene cluster that mediates the biosynthesis of geodin, an intermediate in the biosynthesis of other natural products. With gedR, coregulates the production of geodin. This Aspergillus terreus (strain NIH 2624 / FGSC A1156) protein is Geodin cluster transcriptional coactivator gedD (gedD).